Here is a 152-residue protein sequence, read N- to C-terminus: Small ribosomal subunit protein uS13 (152 aa).

It belongs to the universal ribosomal protein uS13 family. As to quaternary structure, component of the small ribosomal subunit.

The protein resides in the cytoplasm. In terms of biological role, component of the small ribosomal subunit. The ribosome is a large ribonucleoprotein complex responsible for the synthesis of proteins in the cell. The polypeptide is Small ribosomal subunit protein uS13 (rps18) (Ictalurus punctatus (Channel catfish)).